Reading from the N-terminus, the 111-residue chain is Photosystem II reaction center Psb28 protein (111 aa).

It belongs to the Psb28 family. As to quaternary structure, part of the photosystem II complex.

It is found in the cellular thylakoid membrane. The protein is Photosystem II reaction center Psb28 protein of Trichormus variabilis (strain ATCC 29413 / PCC 7937) (Anabaena variabilis).